The sequence spans 349 residues: Heat-inducible transcription repressor HrcA (349 aa).

It belongs to the HrcA family.

Negative regulator of class I heat shock genes (grpE-dnaK-dnaJ and groELS operons). Prevents heat-shock induction of these operons. This is Heat-inducible transcription repressor HrcA from Lactobacillus acidophilus (strain ATCC 700396 / NCK56 / N2 / NCFM).